The sequence spans 589 residues: Threonine--tRNA ligase (589 aa).

The interval 191 to 487 (DHRKIGKNLG…LLEQTKGNFP (297 aa)) is catalytic. Zn(2+) is bound by residues C284, H335, and H464.

Belongs to the class-II aminoacyl-tRNA synthetase family. Homodimer. Requires Zn(2+) as cofactor.

It is found in the cytoplasm. The enzyme catalyses tRNA(Thr) + L-threonine + ATP = L-threonyl-tRNA(Thr) + AMP + diphosphate + H(+). Its function is as follows. Catalyzes the attachment of threonine to tRNA(Thr) in a two-step reaction: L-threonine is first activated by ATP to form Thr-AMP and then transferred to the acceptor end of tRNA(Thr). Also edits incorrectly charged L-seryl-tRNA(Thr). The sequence is that of Threonine--tRNA ligase from Mycoplasmopsis pulmonis (strain UAB CTIP) (Mycoplasma pulmonis).